The following is a 753-amino-acid chain: Synaptotagmin-like protein 5 (753 aa).

The 117-residue stretch at phenylalanine 7–glutamate 123 folds into the RabBD domain. Residues cysteine 64–cysteine 106 form an FYVE-type zinc finger. Disordered stretches follow at residues arginine 145–leucine 188, serine 221–asparagine 283, and threonine 298–leucine 359. Residue serine 147 is modified to Phosphoserine. Over residues serine 224–leucine 238 the composition is skewed to low complexity. Composition is skewed to polar residues over residues threonine 260–serine 275 and threonine 305–threonine 316. 2 C2 domains span residues valine 429–phenylalanine 550 and proline 590–methionine 717.

As to quaternary structure, binds RAB27A that has been activated by GTP-binding.

Its subcellular location is the membrane. Functionally, may act as Rab effector protein and play a role in vesicle trafficking. Binds phospholipids. The sequence is that of Synaptotagmin-like protein 5 (Sytl5) from Rattus norvegicus (Rat).